Here is a 532-residue protein sequence, read N- to C-terminus: Calnexin homolog 2 (532 aa).

The first 25 residues, 1–25, serve as a signal peptide directing secretion; the sequence is MRERIITFVSLLLVALLSFPSVSYC. Residues 26–468 are Lumenal-facing; it reads DDQTILYESF…EKAETQPNLT (443 aa). Residues Ser-34 and Asp-65 each contribute to the Ca(2+) site. Cys-110 and Cys-145 are disulfide-bonded. Residues Tyr-114, Lys-116, Tyr-136, and Asp-143 each contribute to the an alpha-D-glucoside site. A disordered region spans residues 208-302; the sequence is NLLSAEDFEP…DEEDGEWEAP (95 aa). The segment at 225–358 is p domain (Extended arm); sequence IPDPEDKKPE…RDIPNPDYFE (134 aa). Residues 226-242 show a composition bias toward basic and acidic residues; sequence PDPEDKKPEDWDERAKI. A run of 5 repeats spans residues 227–238, 244–255, 263–274, 282–293, and 297–307. 2 4 X approximate repeats regions span residues 227–293 and 297–354; these read DPED…DWDD and GEWE…IPNP. Composition is skewed to acidic residues over residues 252-283 and 290-299; these read DWDE…VEDP and DWDDEEDGEW. An intrachain disulfide couples Cys-309 to Cys-315. 3 tandem repeats follow at residues 316–326, 330–340, and 344–354. Glu-373 serves as a coordination point for an alpha-D-glucoside. Asp-384 is a Ca(2+) binding site. An N-linked (GlcNAc...) asparagine glycan is attached at Asn-466. A helical membrane pass occupies residues 469-489; that stretch reads IGVLISIVIVFLSLFFKLIFG. At 490-532 the chain is on the cytoplasmic side; the sequence is GAKAKVEKKKPETAAETSTSEAKTEEKAEAVAAPRKRQTRRES. The interval 493–532 is disordered; the sequence is AKVEKKKPETAAETSTSEAKTEEKAEAVAAPRKRQTRRES. Residues 523 to 532 show a composition bias toward basic residues; sequence PRKRQTRRES.

It belongs to the calreticulin family.

The protein localises to the endoplasmic reticulum membrane. In terms of biological role, calcium-binding protein that interacts with newly synthesized monoglucosylated glycoproteins in the endoplasmic reticulum. It may act in assisting protein assembly and/or in the retention within the ER of unassembled protein subunits. It seems to play a major role in the quality control apparatus of the ER by the retention of incorrectly folded proteins. This is Calnexin homolog 2 from Arabidopsis thaliana (Mouse-ear cress).